Reading from the N-terminus, the 109-residue chain is Putative double-stranded DNA mimic protein CKO_01325 (109 aa).

It belongs to the putative dsDNA mimic protein family.

In terms of biological role, may act as a double-stranded DNA (dsDNA) mimic. Probably regulates the activity of a dsDNA-binding protein. This chain is Putative double-stranded DNA mimic protein CKO_01325, found in Citrobacter koseri (strain ATCC BAA-895 / CDC 4225-83 / SGSC4696).